We begin with the raw amino-acid sequence, 952 residues long: 2-oxoglutarate dehydrogenase E1 component (952 aa).

The protein belongs to the alpha-ketoglutarate dehydrogenase family. In terms of assembly, homodimer. Part of the 2-oxoglutarate dehydrogenase (OGDH) complex composed of E1 (2-oxoglutarate dehydrogenase), E2 (dihydrolipoamide succinyltransferase) and E3 (dihydrolipoamide dehydrogenase); the complex contains multiple copies of the three enzymatic components (E1, E2 and E3). Requires thiamine diphosphate as cofactor.

It carries out the reaction N(6)-[(R)-lipoyl]-L-lysyl-[protein] + 2-oxoglutarate + H(+) = N(6)-[(R)-S(8)-succinyldihydrolipoyl]-L-lysyl-[protein] + CO2. Functionally, E1 component of the 2-oxoglutarate dehydrogenase (OGDH) complex which catalyzes the decarboxylation of 2-oxoglutarate, the first step in the conversion of 2-oxoglutarate to succinyl-CoA and CO(2). The polypeptide is 2-oxoglutarate dehydrogenase E1 component (Geobacillus sp. (strain WCH70)).